A 1397-amino-acid polypeptide reads, in one-letter code: ABC transporter G family member 41 (1397 aa).

In terms of domain architecture, ABC transporter 1 spans 138 to 411; the sequence is SLSKFVCSKK…FEGCGFKCPE (274 aa). 171-178 lines the ATP pocket; sequence GPPGCGKT. The ABC transmembrane type-2 1 domain occupies 489-701; it reads EMLKACSRRE…AEIGLTANEF (213 aa). A run of 6 helical transmembrane segments spans residues 507–527, 549–570, 594–614, 625–645, 651–671, and 735–755; these read FIYL…MTVF, ALFR…RLGV, IPLS…VIGY, FIIL…IASI, ACSI…GFVI, and TAFG…TLAL. The 246-residue stretch at 805–1050 folds into the ABC transporter 2 domain; sequence VTFQNVQYYI…VIKYFESIPG (246 aa). 842 to 849 serves as a coordination point for ATP; that stretch reads GVSGAGKT. One can recognise an ABC transmembrane type-2 2 domain in the interval 1122–1336; that stretch reads GQLKACLWKQ…VLEGLLSSQY (215 aa). 7 helical membrane passes run 1141-1161, 1173-1193, 1229-1249, 1260-1280, 1286-1306, 1314-1334, and 1369-1389; these read HNLT…LLFW, LFSI…NNCA, VPYS…MIGY, LYSI…MVAL, MALT…GFVM, WWIW…LLSS, and VVAF…AFFM.

It belongs to the ABC transporter superfamily. ABCG family. PDR (TC 3.A.1.205) subfamily. Confined to roots.

It is found in the membrane. May be a general defense protein. This is ABC transporter G family member 41 (ABCG41) from Arabidopsis thaliana (Mouse-ear cress).